The sequence spans 449 residues: Plasmepsin IV (449 aa).

At 1–37 (MALTVKEEEFSNTLIKNASAFDRLKLGNLKNLKIQKK) the chain is on the cytoplasmic side. The propeptide occupies 1–121 (MALTVKEEEF…SGYAQKGYLG (121 aa)). The helical; Signal-anchor for type II membrane protein transmembrane segment at 38–58 (LQFLYLILFVLITGVFFFFLI) threads the bilayer. Topologically, residues 59 to 449 (GNFYSHRKLY…SVGFAVAKNL (391 aa)) are lumenal. The 308-residue stretch at 137–444 (FYGEGQIGTN…DYEKESVGFA (308 aa)) folds into the Peptidase A1 domain. Asp155 is an active-site residue. The cysteines at positions 168 and 173 are disulfide-linked. The active site involves Asp335. A disulfide bridge links Cys370 with Cys406.

Belongs to the peptidase A1 family. Component of the hemozoin formation complex (HFC) composed of falcipains FP2A and/or FP2B, plasmepsins PMII, PMIII/HAP and PMIV, heme detoxifying protein HDP and falcilysin FLN. The HFC complex is involved in hemoglobin degradation and detoxification of heme in the food vacuole during the asexual blood stage. Post-translationally, proteolytically cleaved into the soluble active mature form by cysteine proteases in the digestive vacuole of trophozoites. Proteolysis requires an acidic environment. Autoprocessing or transprocessing by other plasmepsins such as PMII may serve as an alternate activation system.

Its subcellular location is the membrane. It is found in the vacuole lumen. The catalysed reaction is Hydrolysis of the bonds linking certain hydrophobic residues in hemoglobin or globin. Also cleaves small molecules substrates such as Ala-Leu-Glu-Arg-Thr-Phe-|-Phe(NO2)-Ser-Phe-Pro-Thr.. Inhibited by KNI derived compounds KNI-10333 and to a lesser extent KNI-10743. During the asexual blood stage, catalyzes the cleavage of denatured host hemoglobin (Hb). Digestion of host Hb is an essential step which provides the parasite with amino acids for protein synthesis, and regulates osmolarity. The chain is Plasmepsin IV from Plasmodium falciparum (isolate 3D7).